An 87-amino-acid polypeptide reads, in one-letter code: SGAAAAQTAAASSLHQASNHTFYPWMAIAGESTADPIKSKIRSDLTQYGGISTDMGKRYSESLAGSLLPDWLGTNGLRRRGRQTYTR.

An Antp-type hexapeptide motif is present at residues Phe22–Ala27.

Belongs to the Antp homeobox family. In the embryo, expression is seen in the epidermis, somatic and visceral mesoderm, and the peripheral and central nervous system.

Its subcellular location is the nucleus. In terms of biological role, sequence-specific transcription factor which is part of a developmental regulatory system that provides cells with specific positional identities on the anterior-posterior axis. Binds the consensus region 5'-TTAAT[GT][GA]-3'. This homeotic protein controls development of the cells in the posterior thoracic and first abdominal segments. It activates the synthesis of the decapentaplegic (DPP) growth factor. The protein is Homeotic protein ultrabithorax (Ubx) of Drosophila hydei (Fruit fly).